Reading from the N-terminus, the 537-residue chain is Ribonuclease III domain-containing protein RNC1, chloroplastic (537 aa).

The N-terminal 51 residues, 1 to 51, are a transit peptide targeting the chloroplast; that stretch reads MELCSSSPSSSLLRICSSSAPEISFSSSISQFPSKTQSILTKSRFQNLRIC. 2 RNase III domains span residues 141-283 and 415-515; these read LLEV…LCFG and EHPR…TIYG.

In terms of assembly, interacts with RNA. Part of large ribonucleo-protein particles that contain CAF1 and/or CAF2.

It is found in the plastid. The protein resides in the chloroplast. Its function is as follows. Binds specific group II introns in chloroplasts and facilitates their splicing. Acts on both subgroup IIA and subgroup IIB introns. The substrates of the subgroup II also require the CRM domain proteins CAF1 or CAF2. Binds both single-stranded and double-stranded RNA non-specifically, but lacks endonuclease activity. Required for plastid ribosome biogenesis. The protein is Ribonuclease III domain-containing protein RNC1, chloroplastic of Arabidopsis thaliana (Mouse-ear cress).